A 141-amino-acid chain; its full sequence is Transcription antitermination protein NusB (141 aa).

This sequence belongs to the NusB family.

Its function is as follows. Involved in transcription antitermination. Required for transcription of ribosomal RNA (rRNA) genes. Binds specifically to the boxA antiterminator sequence of the ribosomal RNA (rrn) operons. This chain is Transcription antitermination protein NusB, found in Fervidobacterium nodosum (strain ATCC 35602 / DSM 5306 / Rt17-B1).